The sequence spans 712 residues: MKFFVSCAKGLEYLLADELSALGLGKATATIAGVNAEGELEQALRIVMWSRLASRVLWPIDEFECPDEQALYDGVRALPWHEHIKPEMTLAVDAHVSGDKITHARFAAQRIKDAIVDRMRDEGLERPSVNTDLPDVRVNLSLRKGRASLSIDLGGGPLHRRGWRGAAHEAPLKENLAAALLLRAQWPRLHAAGGGLLDPMCGSGTLLIEGALMAADVAPGLMRHGSLPPSRWLGFDKSAWKTIQSEARDREAAGLAALKPVIHGSDIDPTAIQAARENAEVAGVAHAIRFTRADVADLAAPEQEIGAVVCNPPYDERLAADPALYRALGNALQKAVPQWRASLLCGNDELAFATGLRAGKKYQMFNGALECALIVCDPIAVPGRDPAQPRELSEGAQMVANRLRKNLKKFKSWRAREDITCFRAYDADLPEYAAAIDVYEEDGGKRRTFLHVQEYAAPAAIPENDVRRRRNELLAAAREVFGVPPEQVSMKSRERGKGGSKYGRFEQRDEFIVVRENNALLQVNLFDYLDTGLFLDHRPLRRMMAEQVRGKRFLNLFCYTGVASVQAAVAGAASTTSVDLSATYLQWCYDNLALNGQGGNQHLLVQADAMAWLEGDRGQYDVIFCDPPTFSNSARADDFDVQREQLKLLRAAVARLAPGGVLYFSNNFRRFKLEENAIAEFAQCREITARTIGPDFERNARIHRAWELKRLG.

The region spanning 42 to 153 (QALRIVMWSR…KGRASLSIDL (112 aa)) is the THUMP domain.

Belongs to the methyltransferase superfamily. RlmKL family.

Its subcellular location is the cytoplasm. The catalysed reaction is guanosine(2445) in 23S rRNA + S-adenosyl-L-methionine = N(2)-methylguanosine(2445) in 23S rRNA + S-adenosyl-L-homocysteine + H(+). It carries out the reaction guanosine(2069) in 23S rRNA + S-adenosyl-L-methionine = N(2)-methylguanosine(2069) in 23S rRNA + S-adenosyl-L-homocysteine + H(+). Functionally, specifically methylates the guanine in position 2445 (m2G2445) and the guanine in position 2069 (m7G2069) of 23S rRNA. This Stenotrophomonas maltophilia (strain K279a) protein is Ribosomal RNA large subunit methyltransferase K/L.